The following is a 278-amino-acid chain: uncharacterized protein (278 aa).

Residues 1-11 (MMIHIHQDKKM) are compositionally biased toward basic and acidic residues. Disordered stretches follow at residues 1-107 (MMIH…RYFK) and 206-278 (KVSA…KASR). A compositionally biased stretch (low complexity) spans 62 to 94 (KQSGGKNAKSGSKSAKSGSKSAKSGSKTSKTQS). The span at 97–107 (KGDESRDRYFK) shows a compositional bias: basic and acidic residues. Positions 249 to 260 (SAKNAKSTGNKK) are enriched in polar residues. Residues 264 to 278 (KSAGAKKAPAAKASR) are compositionally biased toward low complexity.

This is an uncharacterized protein from Acanthamoeba polyphaga mimivirus (APMV).